The sequence spans 69 residues: Antimicrobial peptide Meucin-18 (69 aa).

The first 16 residues, 1 to 16, serve as a signal peptide directing secretion; that stretch reads MVIFLAYFLVVNESEA. A propeptide spanning residues 38-69 is cleaved from the precursor; that stretch reads ERSVMNRDLENLFDPYQRNLEMDRLLKQLRNY.

The protein belongs to the non-disulfide-bridged peptide (NDBP) superfamily. Medium-length antimicrobial peptide (group 3) family. In terms of tissue distribution, expressed by the venom gland.

It is found in the secreted. The protein localises to the target cell membrane. Functionally, amphipathic peptide that exhibits extensive cytolytic activities against both prokaryotic and eukaryotic cells. Acts by fastly disrupting the bacterial membrane. Is more potent against Gram-positive bacteria than against Gram-negative bacteria, and fungi (LC=25.1-8.3 uM). Shows potent activity against penicillin (MIC=3.0 uM) and methicillin (MIC=1.5-3.0 uM) resistant bacteria. Is lethal to the fungus Beauveria sp (LC=1.9 uM), a highly lethal pathogenic fungus to insects and resistant to many AMPs. Shows hemolytic activity against rabbit erythrocytes (37.7% of inhibition at 6.25 uM) and cytolysis against rat dorsal root ganglions. May act by disrupting the integrity of the bacterial cell membrane. Antibiotic activity is not affected by major negatively charged components of the prokaryotic cell wall (e.g. lipopolysaccharides and lipoteichoic acid). In vivo, intravenous injection into mice tail provokes uncomfortable symptoms with a death rate of 12.5%. In vivo, in a mouse model of lethal peritonitis, shows potent antibiotic activity without cytotoxicity, improving the survival rate. The polypeptide is Antimicrobial peptide Meucin-18 (Mesobuthus eupeus (Lesser Asian scorpion)).